The chain runs to 91 residues: Small ribosomal subunit protein uS19 (91 aa).

Belongs to the universal ribosomal protein uS19 family.

In terms of biological role, protein S19 forms a complex with S13 that binds strongly to the 16S ribosomal RNA. This Paraburkholderia phymatum (strain DSM 17167 / CIP 108236 / LMG 21445 / STM815) (Burkholderia phymatum) protein is Small ribosomal subunit protein uS19.